The following is a 420-amino-acid chain: Glycerol-3-phosphate dehydrogenase [NAD(+)] (420 aa).

NAD(+) contacts are provided by residues 16-21, Phe-48, and Phe-119; that span reads GSGNWG. Lys-142 lines the substrate pocket. Residue Ala-175 participates in NAD(+) binding. A disordered region spans residues 190–217; that stretch reads YDPPPMDNSRAPTPRSNSPANGNGIAPL. The span at 199–210 shows a compositional bias: polar residues; the sequence is RAPTPRSNSPAN. Lys-278 serves as the catalytic Proton acceptor. The NAD(+) site is built by Arg-344 and Gln-373. Residue 344-345 participates in substrate binding; sequence RN.

This sequence belongs to the NAD-dependent glycerol-3-phosphate dehydrogenase family.

The enzyme catalyses sn-glycerol 3-phosphate + NAD(+) = dihydroxyacetone phosphate + NADH + H(+). This Colletotrichum gloeosporioides (Anthracnose fungus) protein is Glycerol-3-phosphate dehydrogenase [NAD(+)].